Here is a 491-residue protein sequence, read N- to C-terminus: Probable folate-biopterin transporter 4 (491 aa).

The next 6 membrane-spanning stretches (helical) occupy residues 14–34 (VAFL…SFVW), 52–72 (SQFV…YGII), 84–104 (TPYL…LGLD), 112–132 (LYLM…DVVI), 154–174 (VSWF…GYAL), and 179–199 (IETI…SCAL). The segment at 222 to 262 (KSLTSNDNYPDTSKSNTRRRKGQKKGKKGDSNGKSETQKKQ) is disordered. Residues 224–236 (LTSNDNYPDTSKS) are compositionally biased toward polar residues. Positions 237–248 (NTRRRKGQKKGK) are enriched in basic residues. Positions 249–260 (KGDSNGKSETQK) are enriched in basic and acidic residues. A run of 6 helical transmembrane segments spans residues 294-314 (MAWF…MFYY), 323-343 (AAFL…GTFI), 356-376 (SLLF…VLVS), 389-411 (MVLF…FLIL), 437-457 (TVGS…SGSF), and 461-481 (FMGL…LFLI).

Belongs to the major facilitator superfamily. Folate-biopterin transporter (TC 2.A.71) family.

It localises to the membrane. Its function is as follows. Could mediate folate transport. The sequence is that of Probable folate-biopterin transporter 4 from Arabidopsis thaliana (Mouse-ear cress).